The primary structure comprises 368 residues: 3-isopropylmalate dehydrogenase (368 aa).

79-92 (GPRYEGLPWDLRPE) contributes to the NAD(+) binding site. Substrate is bound by residues Arg-99, Arg-109, Arg-138, and Asp-228. 3 residues coordinate Mg(2+): Asp-228, Asp-252, and Asp-256. 292-304 (GSAPDIAGQDRAN) serves as a coordination point for NAD(+).

Belongs to the isocitrate and isopropylmalate dehydrogenases family. LeuB type 1 subfamily. Homodimer. Mg(2+) is required as a cofactor. It depends on Mn(2+) as a cofactor.

It localises to the cytoplasm. The enzyme catalyses (2R,3S)-3-isopropylmalate + NAD(+) = 4-methyl-2-oxopentanoate + CO2 + NADH. It functions in the pathway amino-acid biosynthesis; L-leucine biosynthesis; L-leucine from 3-methyl-2-oxobutanoate: step 3/4. Functionally, catalyzes the oxidation of 3-carboxy-2-hydroxy-4-methylpentanoate (3-isopropylmalate) to 3-carboxy-4-methyl-2-oxopentanoate. The product decarboxylates to 4-methyl-2 oxopentanoate. This Symbiobacterium thermophilum (strain DSM 24528 / JCM 14929 / IAM 14863 / T) protein is 3-isopropylmalate dehydrogenase.